The chain runs to 34 residues: Brevinin-2GHa (34 aa).

Cys-27 and Cys-33 form a disulfide bridge.

As to expression, expressed by the skin glands.

Its subcellular location is the secreted. Antimicrobial peptide. Active against the Gram-positive bacteria S.aureus FDA209P (MIC=14.9 ug/ml) and B.subtilis ATCC 6633 (MIC&gt;64 ug/ml), but not active against the Gram-negative bacterium E.coli or the fungus C.albicans. This Sylvirana guentheri (Gunther's frog) protein is Brevinin-2GHa.